A 293-amino-acid polypeptide reads, in one-letter code: Pantothenate synthetase (293 aa).

Residue 30 to 37 participates in ATP binding; that stretch reads MGNLHEGH. His-37 acts as the Proton donor in catalysis. Gln-61 lines the (R)-pantoate pocket. Gln-61 lines the beta-alanine pocket. Residue 149 to 152 participates in ATP binding; that stretch reads GEKD. Gln-155 contacts (R)-pantoate. ATP is bound by residues Val-178 and 186–189; that span reads MSSR.

The protein belongs to the pantothenate synthetase family. Homodimer.

The protein localises to the cytoplasm. The catalysed reaction is (R)-pantoate + beta-alanine + ATP = (R)-pantothenate + AMP + diphosphate + H(+). Its pathway is cofactor biosynthesis; (R)-pantothenate biosynthesis; (R)-pantothenate from (R)-pantoate and beta-alanine: step 1/1. In terms of biological role, catalyzes the condensation of pantoate with beta-alanine in an ATP-dependent reaction via a pantoyl-adenylate intermediate. The sequence is that of Pantothenate synthetase from Vibrio cholerae serotype O1 (strain ATCC 39541 / Classical Ogawa 395 / O395).